Reading from the N-terminus, the 1076-residue chain is GPI inositol-deacylase A (1076 aa).

The chain crosses the membrane as a helical span at residues 3-23 (IATFPALAITALALVLWATVA). 2 N-linked (GlcNAc...) asparagine glycosylation sites follow: Asn-48 and Asn-119. Residue Ser-240 is part of the active site. The N-linked (GlcNAc...) asparagine glycan is linked to Asn-404. 2 helical membrane-spanning segments follow: residues 765–785 (FLGF…LCLL) and 815–835 (WILA…SLLY). Asn-849 carries an N-linked (GlcNAc...) asparagine glycan. Helical transmembrane passes span 855-875 (FLGP…HWLL), 877-897 (ILTL…IAPE), and 910-930 (FLLL…VAVL). 2 N-linked (GlcNAc...) asparagine glycosylation sites follow: Asn-952 and Asn-966. 3 consecutive transmembrane segments (helical) span residues 970-990 (SLLL…VVWL), 1006-1026 (EVSA…GIMI), and 1035-1055 (IYAT…HGVV).

This sequence belongs to the GPI inositol-deacylase family.

It localises to the endoplasmic reticulum membrane. Its function is as follows. Involved in inositol deacylation of GPI-anchored proteins which plays important roles in the quality control and ER-associated degradation of GPI-anchored proteins. The sequence is that of GPI inositol-deacylase A (BST1A) from Yarrowia lipolytica (strain CLIB 122 / E 150) (Yeast).